Consider the following 279-residue polypeptide: Zinc-finger homeodomain protein 1 (279 aa).

The segment covering 1–30 (MEFEDNNNNNDEEQEEDMNLHEEEEDDDAV) has biased composition (acidic residues). The segment at 1 to 62 (MEFEDNNNNN…TTSTGGGGGF (62 aa)) is disordered. The ZF-HD dimerization-type zinc finger occupies 75–124 (FRECLKNQAVNIGGHAVDGCGEFMPAGIEGTIDALKCAACGCHRNFHRKE). Disordered stretches follow at residues 128-199 (FHHA…TKFT) and 245-279 (NNKH…QDQP). Residues 134–143 (QHQPPPPPPG) show a composition bias toward pro residues. A DNA-binding region (homeobox; atypical) is located at residues 191–254 (RKRHRTKFTA…NNKHTLGKSP (64 aa)).

As to quaternary structure, homo- and heterodimer with other ZFHD proteins. Interacts with MIF1 and MIF2; these interactions prevent nuclear localization and DNA-binding to inhibit transcription regulation activity. Binds to ZHD2, ZHD3, ZHD4, ZHD5, ZHD6, ZHD7, ZHD8, ZHD9, ZHD10 and ZHD11. In terms of tissue distribution, mostly expressed in flowers and inflorescence.

It is found in the nucleus. Putative transcription factor. The sequence is that of Zinc-finger homeodomain protein 1 (ZHD1) from Arabidopsis thaliana (Mouse-ear cress).